Reading from the N-terminus, the 321-residue chain is High osmolarity signaling protein SHO1A (321 aa).

The Cytoplasmic segment spans residues 1-28 (MDYNNNRYGGGGGGSKFNLGHIVGDPFS). The chain crosses the membrane as a helical span at residues 29 to 49 (LATIAIATAGWLIAFVSSIIA). The Extracellular segment spans residues 50-58 (NIDQEYPNY). N-linked (GlcNAc...) asparagine glycosylation is present at N57. Residues 59-79 (SWWALAYMFFVILGVTFAVAA) form a helical membrane-spanning segment. A topological domain (cytoplasmic) is located at residue N80. The chain crosses the membrane as a helical span at residues 81 to 101 (AVYTYHVAMVGFLAAGLVFTT). The Extracellular segment spans residues 102 to 116 (SSVNSLIYWSDKAKQ). A helical transmembrane segment spans residues 117 to 137 (AAAAGFILLSMVSIVWIFYFG). Residues 138–321 (SQPTASHRQT…IAPSNYLILL (184 aa)) are Cytoplasmic-facing. Disordered stretches follow at residues 155 to 181 (KDHA…AQHP) and 194 to 261 (TSSP…QQPT). Composition is skewed to polar residues over residues 165-181 (HMTQ…AQHP) and 225-237 (NFSN…PITS). The span at 238 to 249 (QNNPQNQHQQPQ) shows a compositional bias: low complexity. Residues 250–261 (DLTSPSTTQQPT) are compositionally biased toward polar residues. The region spanning 262-321 (EYPYRAKAIYSYEANPDDANEISFNKHEILEVSDVSGRWWQAKKENGETGIAPSNYLILL) is the SH3 domain.

Belongs to the SHO1 family. As to quaternary structure, forms homooligomers.

The protein resides in the cell membrane. In terms of biological role, plasma membrane osmosensor that activates the high osmolarity glycerol (HOG) MAPK signaling pathway in response to high osmolarity. This Hortaea werneckii protein is High osmolarity signaling protein SHO1A (SHO1A).